The sequence spans 101 residues: MTKSELIARLAERYPQLVAKDADYAVKTILDAMSDALATGQRIEIRGFGSFALNSRPPRIGRNPKSGDKVMVPEKRVPHFKPGKQLRERVDAMVGQPIIED.

The protein belongs to the bacterial histone-like protein family. In terms of assembly, heterodimer of an alpha and a beta chain.

Functionally, this protein is one of the two subunits of integration host factor, a specific DNA-binding protein that functions in genetic recombination as well as in transcriptional and translational control. The protein is Integration host factor subunit beta of Janthinobacterium sp. (strain Marseille) (Minibacterium massiliensis).